Consider the following 423-residue polypeptide: TNF receptor-associated factor family protein DDB_G0277243 (423 aa).

The RING-type; degenerate zinc-finger motif lies at 20 to 66; the sequence is CSICVDPVLNSLPLEQHQALSCKNGHLLCQACWGKQLALRKECCICK. TRAF-type zinc fingers lie at residues 124-179 and 180-237; these read SHLR…NDMP and THIE…CYLS. The 125-residue stretch at 287–411 folds into the MATH domain; sequence RYKGNWTIEN…DGKLTINIDV (125 aa).

Belongs to the TNF receptor-associated factor family. A subfamily.

It is found in the cytoplasm. In terms of biological role, probable adapter protein and signal transducer that links members of the tumor necrosis factor receptor family to different signaling pathways by association with the receptor cytoplasmic domain and kinases. The chain is TNF receptor-associated factor family protein DDB_G0277243 from Dictyostelium discoideum (Social amoeba).